A 126-amino-acid chain; its full sequence is UPF0325 protein PBPRA2971 (126 aa).

The protein belongs to the UPF0325 family.

This Photobacterium profundum (strain SS9) protein is UPF0325 protein PBPRA2971.